The following is a 994-amino-acid chain: MPESLIAGIPVHFPFEPYPVQRAYMEKVIQCLKDGTNGVLESPTGTGKTLSLLCSSLAWIRTRQSEHQQQMIKLDKGADLLGGGAGGGPELSDLAKTMGKANNWGVPKVIYASRTHSQLTQAMRELKRTAYSNMRSVVLGSRDQLCIHPEVSREVGNSNKVNMCKLRVHSKTCTFQLRVESKKDHPDFRGPSIMDIEDLIKVGQKLKMCPYYASKELVPQADITFMPYNYLLDPKARKANKIELGNTIVILDEAHNIEKICEESASVQIKSSDVAIAIEDVTHIMKAFASDSPQDMAGDEPKDFTIDDLMLLKEMLLDLEKAIDAVAVDNPIDGATYPASMIYELLGKANFTYGNVATIVALLDKLVQYLMVASQQQMSLRKGGSFTLLSDLLTIVFANKESVMGKVHASFKVHVQVEESKQPQGKQAPAKQAGGWLSKASLTNGSTGKVAKIINFWCFNPGFGMEQLLNTQVRSVILTSGTLAPLKPLIAELAIPVAQHLENPHIVDQSQVYVKIIGTGPDRQPLISNYTNRDNPKYISSLGQTILNVSRLVPDGLLVFFPSYPMLNKCVDAWQASGLWADIASKKPIFLEPRGKDQFTSTMEEFYQAIRDSKGACFMAVCRGKVSEGLDFADRNGRAVIITGLPFPPLKDPKVILKRRYLESNRTRENQLLSGNEWYNLEATRAVNQAIGRVIRHRNDYGAILLCDSRFKDAAQVQQLSKWIRGHLGDRPQCSPFGPIVRELRQFFKNAETTMKQPDERESGAPLETVIKKEDEPLAPISQIKREPGSNATFKAANETAIKVEMANSIKSWSPDDYACAAGRKLGGSSAPNAMDFMSRLDSNVSSIDFNCMDSRNGSNSSGLVKIHKRERSSPPGSSQSSSQTAKKRYKLVENISTIKVEPPVEVKKEVPESRAAFLREIRSLVGQDQFRAFGQALLEYKDGSKDKFEALMKVVFEVLGGPRCRHLLVGMRKYIKADDKPEFDIRLAKLEKS.

A Helicase ATP-binding domain is found at 7 to 316; sequence AGIPVHFPFE…DDLMLLKEML (310 aa). 42 to 49 serves as a coordination point for ATP; sequence SPTGTGKT. Residues cysteine 146, cysteine 164, cysteine 173, and cysteine 209 each coordinate [4Fe-4S] cluster. Positions 252–255 match the DEAH box motif; it reads DEAH. The disordered stretch occupies residues 861–887; sequence SSGLVKIHKRERSSPPGSSQSSSQTAK. The span at 874–884 shows a compositional bias: low complexity; sequence SPPGSSQSSSQ.

The protein belongs to the helicase family. RAD3/XPD subfamily.

Its subcellular location is the nucleus. The catalysed reaction is ATP + H2O = ADP + phosphate + H(+). In terms of biological role, a probable ATP-dependent DNA helicase implicated in DNA repair and the maintenance of genomic stability. Acts as an anti-recombinase to counteract toxic recombination and limit crossover during meiosis. Regulates meiotic recombination and crossover homeostasis by physically dissociating strand invasion events and thereby promotes noncrossover repair by meiotic synthesis dependent strand annealing (SDSA) as well as disassembly of D loop recombination intermediates. The protein is Regulator of telomere elongation helicase 1 homolog of Drosophila ananassae (Fruit fly).